Reading from the N-terminus, the 375-residue chain is MTLPPAYVDELNLLNREVTTKQPTDILRFCADYFNERLAKREEADDDGPRSKPLGGGFREPGFGSSSRSTDGSLFRSSFADTSSEGPGSASSEPAAPFTRRTSVSAESIAPGAFAGAASGVASNNLSAEQLESLYKSVSHNFLFGNLDEEACRSVLQSLQEKKCDSGEKIITQGDEGDYFYIVESGAVEFIKDGVKVNSSGPGSSFGELALMYNAPRAATVVATQPCVLWSLDRVTFRKILLDGTHQRRSMYDGFLKEVPILSDLGSYERNKLADALTSQVVEPGTAVITEGEAGDAFYLVESGEAEVTKKGESGVVATLKQGDYFGEVALLNDLPRQATVTAKTKLKVATLGKDGFQRLLGPVLDHLKENDPTK.

Residues 28 to 142 (RFCADYFNER…SLYKSVSHNF (115 aa)) are dimerization and phosphorylation. Residues 41 to 50 (REEADDDGPR) are compositionally biased toward basic and acidic residues. Residues 41–102 (REEADDDGPR…EPAAPFTRRT (62 aa)) form a disordered region. The segment covering 64 to 82 (GSSSRSTDGSLFRSSFADT) has biased composition (polar residues). The span at 83-97 (SSEGPGSASSEPAAP) shows a compositional bias: low complexity. At serine 103 the chain carries Phosphoserine. Residues 143–258 (LFGN…FLKE), glutamate 208, arginine 217, 261–375 (ILSD…DPTK), glutamate 328, and arginine 337 each bind 3',5'-cyclic AMP.

Belongs to the cAMP-dependent kinase regulatory chain family. As to quaternary structure, tetramer, composed of 2 regulatory (R) and 2 catalytic (C) subunits. In the presence of cAMP it dissociates into 2 active monomeric C subunits and an R dimer.

This chain is cAMP-dependent protein kinase regulatory subunit (PKAR), found in Yarrowia lipolytica (strain CLIB 122 / E 150) (Yeast).